A 133-amino-acid polypeptide reads, in one-letter code: uncharacterized protein (133 aa).

Residues 1–23 form the signal peptide; that stretch reads MSRKIIPALTIFFGPILILTAIT. Positions 82 to 133 are disordered; the sequence is ESIKNQNSLNKEKQQQQQQQQQQQQQQQQQQQQQQKPNTPPTPLTTPSTPKK. Residues 96 to 118 show a composition bias toward low complexity; that stretch reads QQQQQQQQQQQQQQQQQQQQQKP.

It is found in the secreted. This is an uncharacterized protein from Dictyostelium discoideum (Social amoeba).